The sequence spans 234 residues: Inner membrane protein YbhL (234 aa).

The Periplasmic portion of the chain corresponds to 1–23; sequence MDRFPRSDSIVQPRAGLQTYMAQ. Residues 24 to 44 traverse the membrane as a helical segment; that stretch reads VYGWMTVGLLLTAFVAWYAAN. Residues 45–56 are Cytoplasmic-facing; it reads SAAVMELLFTNR. A helical membrane pass occupies residues 57 to 77; the sequence is VFLIGLIIAQLALVIVLSAMI. Topologically, residues 78–79 are periplasmic; the sequence is QK. Residues 80–100 form a helical membrane-spanning segment; sequence LSAGVTTMLFMLYSALTGLTL. At 101 to 102 the chain is on the cytoplasmic side; sequence SS. A helical transmembrane segment spans residues 103 to 123; sequence IFIVYTAASIASTFVVTAGMF. The Periplasmic portion of the chain corresponds to 124–136; sequence GAMSLYGYTTKRD. A helical transmembrane segment spans residues 137 to 157; the sequence is LSGFGNMLFMALIGIVLASLV. The Cytoplasmic segment spans residues 158–163; that stretch reads NFWLKS. The chain crosses the membrane as a helical span at residues 164–184; that stretch reads EALMWAVTYIGVIVFVGLTAY. The Periplasmic portion of the chain corresponds to 185–206; that stretch reads DTQKLKNMGEQIDTRDTSNLRK. The chain crosses the membrane as a helical span at residues 207 to 227; sequence YSILGALTLYLDFINLFLMLL. The Cytoplasmic segment spans residues 228–234; the sequence is RIFGNRR.

Belongs to the BI1 family.

It is found in the cell inner membrane. The protein is Inner membrane protein YbhL (ybhL) of Escherichia coli (strain K12).